The chain runs to 136 residues: Large-conductance mechanosensitive channel (136 aa).

A run of 2 helical transmembrane segments spans residues 10–30 (FAMR…AAFG) and 76–96 (GVFI…FMAI).

This sequence belongs to the MscL family. Homopentamer.

The protein localises to the cell inner membrane. Functionally, channel that opens in response to stretch forces in the membrane lipid bilayer. May participate in the regulation of osmotic pressure changes within the cell. This chain is Large-conductance mechanosensitive channel, found in Escherichia coli O127:H6 (strain E2348/69 / EPEC).